Here is a 213-residue protein sequence, read N- to C-terminus: Glycerol-3-phosphate acyltransferase (213 aa).

The next 6 helical transmembrane spans lie at 3–23, 55–75, 80–100, 110–130, 142–162, and 163–183; these read ILLL…LWIG, ITFL…IWLG, SPLI…FTGF, AGVL…VFAL, SITA…IHFL, and LDGY…VIIF.

The protein belongs to the PlsY family. As to quaternary structure, probably interacts with PlsX.

It localises to the cell membrane. It carries out the reaction an acyl phosphate + sn-glycerol 3-phosphate = a 1-acyl-sn-glycero-3-phosphate + phosphate. It functions in the pathway lipid metabolism; phospholipid metabolism. Functionally, catalyzes the transfer of an acyl group from acyl-phosphate (acyl-PO(4)) to glycerol-3-phosphate (G3P) to form lysophosphatidic acid (LPA). This enzyme utilizes acyl-phosphate as fatty acyl donor, but not acyl-CoA or acyl-ACP. The protein is Glycerol-3-phosphate acyltransferase of Streptococcus thermophilus (strain CNRZ 1066).